A 220-amino-acid chain; its full sequence is Cell division protein SepF (220 aa).

The interval 33 to 82 (GAARGYARRPREDRFEEEGYIDRAGREYDDRPAPREYDEPPIYRGGYDEP) is disordered. Positions 52-70 (YIDRAGREYDDRPAPREYD) are enriched in basic and acidic residues.

The protein belongs to the SepF family. As to quaternary structure, homodimer. Interacts with FtsZ.

The protein resides in the cytoplasm. Functionally, cell division protein that is part of the divisome complex and is recruited early to the Z-ring. Probably stimulates Z-ring formation, perhaps through the cross-linking of FtsZ protofilaments. Its function overlaps with FtsA. The polypeptide is Cell division protein SepF (Mycobacterium sp. (strain JLS)).